The following is a 297-amino-acid chain: Large ribosomal subunit protein uL18 (297 aa).

At G2 the chain carries N-acetylglycine. K5 and K48 each carry N6-acetyllysine. S185 bears the Phosphoserine mark. K220 carries the N6-acetyllysine; alternate modification. K220 participates in a covalent cross-link: Glycyl lysine isopeptide (Lys-Gly) (interchain with G-Cter in SUMO1); alternate. Residue K220 forms a Glycyl lysine isopeptide (Lys-Gly) (interchain with G-Cter in SUMO2); alternate linkage. A Phosphothreonine modification is found at T232. The tract at residues 253–297 is disordered; it reads YEKKPKKEVKKKRWNRPKMSLAQKKDRVAQKKASFLRAQERAAES. The span at 258-268 shows a compositional bias: basic residues; the sequence is KKEVKKKRWNR. S272 bears the Phosphoserine mark.

Belongs to the universal ribosomal protein uL18 family. In terms of assembly, component of the large ribosomal subunit (LSU). Part of the 5S RNP complex, which is a LSU subcomplex composed of the 5S RNA, RPL5 and RPL11. Component of a hexameric 5S RNP precursor complex, composed of 5S RNA, RRS1, RPF2/BXDC1, RPL5, RPL11 and HEATR3; this complex acts as a precursor for ribosome assembly. Interacts with NVL in an ATP-dependent manner. Interacts with RRP1B. Interacts with IPO5, IPO7 and KPNB1; these interactions may be involved in RPL5 nuclear import for the assembly of ribosomal subunits. Interacts with RRP1B.

The protein localises to the cytoplasm. It localises to the nucleus. The protein resides in the nucleolus. Its function is as follows. Component of the ribosome, a large ribonucleoprotein complex responsible for the synthesis of proteins in the cell. The small ribosomal subunit (SSU) binds messenger RNAs (mRNAs) and translates the encoded message by selecting cognate aminoacyl-transfer RNA (tRNA) molecules. The large subunit (LSU) contains the ribosomal catalytic site termed the peptidyl transferase center (PTC), which catalyzes the formation of peptide bonds, thereby polymerizing the amino acids delivered by tRNAs into a polypeptide chain. The nascent polypeptides leave the ribosome through a tunnel in the LSU and interact with protein factors that function in enzymatic processing, targeting, and the membrane insertion of nascent chains at the exit of the ribosomal tunnel. As part of the 5S RNP/5S ribonucleoprotein particle it is an essential component of the LSU, required for its formation and the maturation of rRNAs. It also couples ribosome biogenesis to p53/TP53 activation. As part of the 5S RNP it accumulates in the nucleoplasm and inhibits MDM2, when ribosome biogenesis is perturbed, mediating the stabilization and the activation of TP53. This is Large ribosomal subunit protein uL18 (RPL5) from Macaca fascicularis (Crab-eating macaque).